Consider the following 182-residue polypeptide: Ferritin heavy chain (182 aa).

At methionine 1 the chain carries N-acetylmethionine. Threonine 2 carries the N-acetylthreonine; in Ferritin heavy chain, N-terminally processed modification. Positions 11 to 160 (QNYHQDSEAA…DHVTNLRKMG (150 aa)) constitute a Ferritin-like diiron domain. 5 residues coordinate Fe cation: glutamate 28, glutamate 63, histidine 66, glutamate 108, and glutamine 142.

Belongs to the ferritin family. As to quaternary structure, oligomer of 24 subunits. There are two types of subunits: L (light) chain and H (heavy) chain. The major chain can be light or heavy, depending on the species and tissue type. The functional molecule forms a roughly spherical shell with a diameter of 12 nm and contains a central cavity into which the insoluble mineral iron core is deposited. Interacts with NCOA4; NCOA4 promotes targeting of the iron-binding ferritin complex to autolysosomes following starvation or iron depletion.

The protein resides in the cytoplasm. Its subcellular location is the lysosome. The protein localises to the cytoplasmic vesicle. It is found in the autophagosome. The catalysed reaction is 4 Fe(2+) + O2 + 4 H(+) = 4 Fe(3+) + 2 H2O. In terms of biological role, stores iron in a soluble, non-toxic, readily available form. Important for iron homeostasis. Has ferroxidase activity. Iron is taken up in the ferrous form and deposited as ferric hydroxides after oxidation. Also plays a role in delivery of iron to cells. Mediates iron uptake in capsule cells of the developing kidney. Delivery to lysosomes is mediated by the cargo receptor NCOA4 for autophagic degradation and release of iron. This is Ferritin heavy chain (Fth1) from Rattus norvegicus (Rat).